The chain runs to 272 residues: Putative bark agglutinin LECRPA3 (272 aa).

An N-terminal signal peptide occupies residues 1–29 (PFNPETVYALLAMLISFFVLLASARKENS). N-linked (GlcNAc...) asparagine glycosylation is found at Asn36, Asn39, and Asn65. The Mn(2+) site is built by Glu150 and Asp152. The Ca(2+) site is built by Asp152, Tyr154, Asn156, and Asp159. Mn(2+) contacts are provided by Asp159 and His164.

This sequence belongs to the leguminous lectin family. In terms of assembly, homotetramer. Weak expression in bark. The lectin accumulates in the inner bark in autumn.

Its function is as follows. Bark lectins are storage proteins that probably maintain stocks of nitrogen during dormant period. Self-aggregatable molecules that can bind their own carbohydrate side chains. They could also play a role in the plant's defense against phytophagous invertebrates or herbivorous higher animals. The chain is Putative bark agglutinin LECRPA3 from Robinia pseudoacacia (Black locust).